Consider the following 184-residue polypeptide: Ras-related protein Rap-1b (184 aa).

Residue 10-18 (GSGGVGKSA) participates in GTP binding. The interaction with KRIT1 stretch occupies residues 25-67 (QGIFVEKYDPTIEDSYRKQVEVDAQQCMLEILDTAGTEQFTAM). The Effector region motif lies at 32-40 (YDPTIEDSY). At Ser39 the chain carries ADP-ribosylserine; by botulinum toxin. Residues 57-61 (DTAGT), 116-119 (NKCD), and 147-149 (SAK) contribute to the GTP site. Ser179 carries the post-translational modification Phosphoserine; by PKA. The residue at position 181 (Cys181) is a Cysteine methyl ester. A lipid anchor (S-geranylgeranyl cysteine) is attached at Cys181. The propeptide at 182–184 (QLL) is removed in mature form.

It belongs to the small GTPase superfamily. Ras family. Heterodimer with RAP1GAP. Interacts with EPAC2. Interacts with SGSM1. Interacts with SGSM2. Interacts with SGSM3. Interacts with KRIT1. Interacts with RAP1GDS1.

It localises to the cell membrane. Its subcellular location is the cytoplasm. It is found in the cytosol. The protein localises to the cell junction. It catalyses the reaction GTP + H2O = GDP + phosphate + H(+). Activated by guanine nucleotide-exchange factor (GEF) EPAC2 in a cAMP-dependent manner. Functionally, GTP-binding protein that possesses intrinsic GTPase activity. Contributes to the polarizing activity of KRIT1 and CDH5 in the establishment and maintenance of correct endothelial cell polarity and vascular lumen. Required for the localization of phosphorylated PRKCZ, PARD3 and TIAM1 to the cell junction. Plays a role in the establishment of basal endothelial barrier function. The sequence is that of Ras-related protein Rap-1b (Rap1b) from Rattus norvegicus (Rat).